Here is an 82-residue protein sequence, read N- to C-terminus: uncharacterized protein (82 aa).

Positions 1–20 (MMNLSPPFKSPSGSSRAGRR) are disordered.

This is an uncharacterized protein from Archaeoglobus fulgidus (strain ATCC 49558 / DSM 4304 / JCM 9628 / NBRC 100126 / VC-16).